We begin with the raw amino-acid sequence, 471 residues long: Tryptophanase (471 aa).

N6-(pyridoxal phosphate)lysine is present on Lys-270.

The protein belongs to the beta-eliminating lyase family. Homotetramer. Pyridoxal 5'-phosphate is required as a cofactor.

The catalysed reaction is L-tryptophan + H2O = indole + pyruvate + NH4(+). It participates in amino-acid degradation; L-tryptophan degradation via pyruvate pathway; indole and pyruvate from L-tryptophan: step 1/1. The chain is Tryptophanase from Histophilus somni (strain 129Pt) (Haemophilus somnus).